Reading from the N-terminus, the 667-residue chain is Fermitin family homolog 3 (667 aa).

A Phosphoserine modification is found at Ser8. Tyr11 carries the phosphotyrosine modification. The 330-residue stretch at 229 to 558 (WLDSSRCLMQ…SLPDFGISYV (330 aa)) folds into the FERM domain. The PH domain occupies 354-457 (DHLRIFRIPR…WMAGCRLASK (104 aa)). Tyr504 is subject to Phosphotyrosine. Thr591 carries the phosphothreonine modification.

Belongs to the kindlin family. Interacts with ITGB1, ITGB2 and ITGB3 (via cytoplasmic tails). As to expression, highly expressed in lymph node. Expressed in thymus, spleen and leukocytes. Weakly expressed in placenta, small intestine, stomach, testis and lung. Overexpressed in B-cell malignancies.

It is found in the cell projection. The protein localises to the podosome. Its function is as follows. Plays a central role in cell adhesion in hematopoietic cells. Acts by activating the integrin beta-1-3 (ITGB1, ITGB2 and ITGB3). Required for integrin-mediated platelet adhesion and leukocyte adhesion to endothelial cells. Required for activation of integrin beta-2 (ITGB2) in polymorphonuclear granulocytes (PMNs). Functionally, isoform 2 may act as a repressor of NF-kappa-B and apoptosis. The chain is Fermitin family homolog 3 (FERMT3) from Homo sapiens (Human).